The following is a 101-amino-acid chain: Small ribosomal subunit protein bS18c (101 aa).

The protein belongs to the bacterial ribosomal protein bS18 family. Part of the 30S ribosomal subunit.

The protein resides in the plastid. The protein localises to the chloroplast. This is Small ribosomal subunit protein bS18c from Coffea arabica (Arabian coffee).